A 374-amino-acid polypeptide reads, in one-letter code: Tryptophan--tRNA ligase (374 aa).

The short motif at 71–79 is the 'HIGH' region element; that stretch reads PSGRMHLGH. Positions 247–251 match the 'KMSKS' region motif; sequence KMSSS.

This sequence belongs to the class-I aminoacyl-tRNA synthetase family.

It localises to the cytoplasm. It catalyses the reaction tRNA(Trp) + L-tryptophan + ATP = L-tryptophyl-tRNA(Trp) + AMP + diphosphate + H(+). This is Tryptophan--tRNA ligase from Methanopyrus kandleri (strain AV19 / DSM 6324 / JCM 9639 / NBRC 100938).